Here is a 511-residue protein sequence, read N- to C-terminus: MHTTESKDEHLEDENFQTSTTPQSLIDPNSTAHEETKTVISDTEEIKPQTKKKTYISCPLRGALNRIITNGVILFVIWCTTWSVLGSEALPGGNLFGLLIIFCSAIIGGKILQLIRIPLVPPLPPLLGMLLAGFTIRNVPFISKHVHVHNTWSSILRSTALTVILIRAGLGLDPQALRHLKVVCFRLAVGPCLMEASAAAVFSHFIMKFPWEWAFLLGFVLGAVSPAIVVPSMMVLQENGYGVEEGIPSLLMAASSMDDVLAITGFNTCLSIVFSSGGIVNNAIASIKSVSISLLAGIVLGFFVRYFPSEDQKKLALERGFLILTMCVSAVLGSQRIGLHGTGGLFTLVLSFIAGTKWSQEKMKVQKIITNVWDIFQPLLFGLVGAEVSVSLLESNTIGIFVATLSLALCVRILVTYILMCFAGFSFKEKIFIALAWMPKATVQAVLGPLVLETARVSAPHLEPYSKDVMTVAFLAILITAPNGALLMGILGPKLLRRHYDPSKIKLQLST.

Positions 1 to 10 (MHTTESKDEH) are enriched in basic and acidic residues. Residues 1–41 (MHTTESKDEHLEDENFQTSTTPQSLIDPNSTAHEETKTVIS) are disordered. The span at 16–31 (FQTSTTPQSLIDPNST) shows a compositional bias: polar residues. Transmembrane regions (helical) follow at residues 67–87 (IITN…VLGS), 95–115 (LFGL…LQLI), 116–136 (RIPL…GFTI), 152–172 (WSSI…GLGL), 187–207 (LAVG…HFIM), 215–235 (FLLG…SMMV), 260–280 (VLAI…GGIV), 284–304 (IASI…GFFV), 337–357 (IGLH…AGTK), 368–388 (IITN…GAEV), 398–418 (IGIF…VTYI), 431–451 (IFIA…GPLV), and 472–492 (VAFL…GILG).

This sequence belongs to the monovalent cation:proton antiporter 1 (CPA1) transporter (TC 2.A.36) family.

It localises to the cell projection. The protein localises to the cilium. Its subcellular location is the flagellum membrane. Its function is as follows. Sperm-specific Na(+)/H(+) exchanger involved in intracellular pH regulation of spermatozoa. Involved in sperm motility and fertility. The chain is Sodium/hydrogen exchanger 9B1 (SLC9B1) from Macaca fascicularis (Crab-eating macaque).